We begin with the raw amino-acid sequence, 168 residues long: MLPARLRTFFLPACLVALAVLVASFRLENTVGLMPCPLCLSQRLLLGGYALLCFAAVLQAPGTRGILRYARLALGCSLAGALLAARHVWLQGAEGVNEVCPVPIGRVFEQSWSEAARQLLLGGPDCRSLAWSFLDLTLPEWSLLAFLLLAVLPLSCLLAYRFRTLART.

Residues 1-9 are Cytoplasmic-facing; it reads MLPARLRTF. Residues 10 to 26 form a helical membrane-spanning segment; it reads FLPACLVALAVLVASFR. Residues 27 to 44 are Periplasmic-facing; that stretch reads LENTVGLMPCPLCLSQRL. C36 and C39 are joined by a disulfide. The helical transmembrane segment at 45-61 threads the bilayer; the sequence is LLGGYALLCFAAVLQAP. Residues 62-67 are Cytoplasmic-facing; that stretch reads GTRGIL. Residues 68–85 traverse the membrane as a helical segment; the sequence is RYARLALGCSLAGALLAA. Residues 86–140 are Periplasmic-facing; the sequence is RHVWLQGAEGVNEVCPVPIGRVFEQSWSEAARQLLLGGPDCRSLAWSFLDLTLPE. A disulfide bond links C100 and C126. The chain crosses the membrane as a helical span at residues 141–159; the sequence is WSLLAFLLLAVLPLSCLLA. Topologically, residues 160 to 168 are cytoplasmic; that stretch reads YRFRTLART.

This sequence belongs to the DsbB family.

It localises to the cell inner membrane. Functionally, required for disulfide bond formation in some periplasmic proteins. Acts by oxidizing the DsbA protein. The sequence is that of Disulfide bond formation protein B 2 (dsbB2) from Pseudomonas putida (strain ATCC 47054 / DSM 6125 / CFBP 8728 / NCIMB 11950 / KT2440).